The chain runs to 222 residues: Superoxide dismutase [Mn], mitochondrial (222 aa).

The N-terminal 24 residues, 1 to 24, are a transit peptide targeting the mitochondrion; it reads MLSRAVCGTGRQLAPALGYLGSRQ. His-50 serves as a coordination point for Mn(2+). At Tyr-58 the chain carries 3'-nitrotyrosine. An N6-acetyllysine; alternate mark is found at Lys-68 and Lys-75. Residues Lys-68 and Lys-75 each carry the N6-succinyllysine; alternate modification. His-98 contributes to the Mn(2+) binding site. Lys-114 bears the N6-acetyllysine mark. Residues Lys-122 and Lys-130 each carry the N6-acetyllysine; alternate modification. An N6-succinyllysine; alternate mark is found at Lys-122 and Lys-130. 2 residues coordinate Mn(2+): Asp-183 and His-187. Lys-202 carries the post-translational modification N6-acetyllysine.

It belongs to the iron/manganese superoxide dismutase family. As to quaternary structure, homotetramer. Mn(2+) is required as a cofactor. In terms of processing, nitrated under oxidative stress. Nitration coupled with oxidation inhibits the catalytic activity. Post-translationally, acetylation at Lys-122 decreases enzymatic activity. Deacetylated by SIRT3 upon exposure to ionizing radiations or after long fasting. Polyubiquitinated; leading to proteasomal degradation. Deubiquitinated by USP36 which increases protein stability.

It localises to the mitochondrion matrix. The enzyme catalyses 2 superoxide + 2 H(+) = H2O2 + O2. Functionally, destroys superoxide anion radicals which are normally produced within the cells and which are toxic to biological systems. This Macaca nemestrina (Pig-tailed macaque) protein is Superoxide dismutase [Mn], mitochondrial (SOD2).